Here is a 551-residue protein sequence, read N- to C-terminus: RCC1 and BTB domain-containing protein 2 (551 aa).

RCC1 repeat units lie at residues 64–115, 117–169, 171–222, 223–274, 276–326, and 328–382; these read NDEI…VLAT, EGEV…VLTS, GEVF…AVVD, TGEV…VLTD, GQVY…AAKT, and GGHV…TVAE. The BTB domain occupies 394-457; it reads ADLKFLVDGK…LYTDSISLSP (64 aa).

It localises to the cytoplasmic vesicle. The protein resides in the secretory vesicle. It is found in the acrosome. This is RCC1 and BTB domain-containing protein 2 (RCBTB2) from Homo sapiens (Human).